The sequence spans 301 residues: NADH-cytochrome b5 reductase 3 (301 aa).

Residue Gly2 is the site of N-myristoyl glycine attachment. The region spanning 40 to 152 is the FAD-binding FR-type domain; it reads DIKYPLRLID…RGPNGLLVYQ (113 aa). Residue Lys42 is modified to N6-acetyllysine. A Phosphotyrosine modification is found at Tyr43. At Lys50 the chain carries N6-acetyllysine. Positions 92, 93, 94, 109, 111, and 114 each coordinate FAD. An N6-acetyllysine modification is found at Lys120. FAD-binding residues include Lys126, Met127, Ser128, and Thr185.

The protein belongs to the flavoprotein pyridine nucleotide cytochrome reductase family. As to quaternary structure, component of a complex composed of cytochrome b5, NADH-cytochrome b5 reductase (CYB5R3) and MTARC2. Interacts with MTLN; the interaction is required to maintain cellular lipid composition and leads to stimulation of mitochondrial respiratory complex I activity. Requires FAD as cofactor.

It is found in the endoplasmic reticulum membrane. The protein resides in the mitochondrion outer membrane. The catalysed reaction is 2 Fe(III)-[cytochrome b5] + NADH = 2 Fe(II)-[cytochrome b5] + NAD(+) + H(+). Its function is as follows. Catalyzes the reduction of two molecules of cytochrome b5 using NADH as the electron donor. The sequence is that of NADH-cytochrome b5 reductase 3 (CYB5R3) from Bos taurus (Bovine).